The following is a 589-amino-acid chain: uncharacterized protein (589 aa).

Disordered regions lie at residues 328–365 (LSSTSDASAAPAGVAGGGKARQMQFSQGGSGQGAEDGP), 379–459 (SLLG…DPSN), 525–555 (RSTSRLDAGEGQGDDDDEEDGQAEKYEGAVK), and 569–589 (VRGTKVVVQPSPPGDDSSRDM). Over residues 398–425 (VSLSSASTSARPTQRRSSLTPCSQTPQE) the composition is skewed to polar residues. Basic and acidic residues predominate over residues 426–445 (THQHAREALTTRMESQREAN). A compositionally biased stretch (acidic residues) spans 536–545 (QGDDDDEEDG).

This is an uncharacterized protein from Mycosarcoma maydis (Corn smut fungus).